The following is a 98-amino-acid chain: NADH-ubiquinone oxidoreductase chain 4L (98 aa).

A run of 3 helical transmembrane segments spans residues 1 to 21 (MSLT…GLLM), 29 to 49 (SLLC…MTIL), and 61 to 81 (IILL…LVMV).

It belongs to the complex I subunit 4L family. As to quaternary structure, core subunit of respiratory chain NADH dehydrogenase (Complex I) which is composed of 45 different subunits.

The protein resides in the mitochondrion inner membrane. The enzyme catalyses a ubiquinone + NADH + 5 H(+)(in) = a ubiquinol + NAD(+) + 4 H(+)(out). Functionally, core subunit of the mitochondrial membrane respiratory chain NADH dehydrogenase (Complex I) which catalyzes electron transfer from NADH through the respiratory chain, using ubiquinone as an electron acceptor. Part of the enzyme membrane arm which is embedded in the lipid bilayer and involved in proton translocation. This Vampyressa brocki (Brock's yellow-eared bat) protein is NADH-ubiquinone oxidoreductase chain 4L (MT-ND4L).